The following is a 217-amino-acid chain: Small ribosomal subunit protein uS3 (217 aa).

The KH type-2 domain maps to isoleucine 38 to lysine 106.

The protein belongs to the universal ribosomal protein uS3 family. As to quaternary structure, part of the 30S ribosomal subunit. Forms a tight complex with proteins S10 and S14.

Its function is as follows. Binds the lower part of the 30S subunit head. Binds mRNA in the 70S ribosome, positioning it for translation. The protein is Small ribosomal subunit protein uS3 of Staphylococcus haemolyticus (strain JCSC1435).